Consider the following 170-residue polypeptide: RNA pyrophosphohydrolase (170 aa).

The region spanning 6-149 (GFRPNVGIVI…KRDVYRRALK (144 aa)) is the Nudix hydrolase domain. A Nudix box motif is present at residues 38–59 (GGIDDGETPEQAMYRELYEEVG).

This sequence belongs to the Nudix hydrolase family. RppH subfamily. The cofactor is a divalent metal cation.

Functionally, accelerates the degradation of transcripts by removing pyrophosphate from the 5'-end of triphosphorylated RNA, leading to a more labile monophosphorylated state that can stimulate subsequent ribonuclease cleavage. In Aliivibrio salmonicida (strain LFI1238) (Vibrio salmonicida (strain LFI1238)), this protein is RNA pyrophosphohydrolase.